We begin with the raw amino-acid sequence, 109 residues long: Ubiquitin-related modifier 1 homolog (109 aa).

Gly-109 bears the 1-thioglycine mark. A Glycyl lysine isopeptide (Gly-Lys) (interchain with K-? in acceptor proteins) cross-link involves residue Gly-109.

The protein belongs to the URM1 family. C-terminal thiocarboxylation occurs in 2 steps, it is first acyl-adenylated (-COAMP) via the hesA/moeB/thiF part of the MOCS3 homolog, then thiocarboxylated (-COSH) via the rhodanese domain of the MOCS3 homolog.

It is found in the cytoplasm. It participates in tRNA modification; 5-methoxycarbonylmethyl-2-thiouridine-tRNA biosynthesis. Acts as a sulfur carrier required for 2-thiolation of mcm(5)S(2)U at tRNA wobble positions of cytosolic tRNA(Lys), tRNA(Glu) and tRNA(Gln). Serves as sulfur donor in tRNA 2-thiolation reaction by being thiocarboxylated (-COSH) at its C-terminus by MOCS3. The sulfur is then transferred to tRNA to form 2-thiolation of mcm(5)S(2)U. Also acts as a ubiquitin-like protein (UBL) that is covalently conjugated via an isopeptide bond to lysine residues of target proteins. The thiocarboxylated form serves as substrate for conjugation and oxidative stress specifically induces the formation of UBL-protein conjugates. The polypeptide is Ubiquitin-related modifier 1 homolog (Bombyx mori (Silk moth)).